Reading from the N-terminus, the 312-residue chain is Small kinetochore-associated protein (312 aa).

The segment at 1–171 is disordered; the sequence is MAAPEAEAQE…PFNKQKPEEE (171 aa). Over residues 131 to 143 the composition is skewed to basic and acidic residues; sequence DVTKVTKSRRENG. Residues 156–312 form an interaction with SPAG5 region; sequence LRNSYKPFNK…LEEMEQLLEM (157 aa). 2 coiled-coil regions span residues 166 to 210 and 246 to 287; these read QKPE…LEKF and LLET…QFLE.

As to quaternary structure, part of an astrin (SPAG5)-kinastrin (SKAP) complex containing KNSTRN, SPAG5, PLK1, DYNLL1 and SGO2A. Interacts with SPAG5. Directly binds to microtubules, although at relatively low affinity. Interacts with CENPE; this interaction greatly favors microtubule-binding. Interacts with DSN1/MIS13; leading to localization to kinetochores. Interacts with MAPRE1/EB1; leading to localization to the microtubule plus ends. Interacts with PRPF19. Interacts with DYNLL1. Interacts with MAP4.

The protein localises to the nucleus. It localises to the chromosome. It is found in the centromere. The protein resides in the kinetochore. Its subcellular location is the cytoplasm. The protein localises to the cytoskeleton. It localises to the spindle pole. It is found in the microtubule organizing center. In terms of biological role, essential component of the mitotic spindle required for faithful chromosome segregation and progression into anaphase. Promotes the metaphase-to-anaphase transition and is required for chromosome alignment, normal timing of sister chromatid segregation, and maintenance of spindle pole architecture. The astrin (SPAG5)-kinastrin (SKAP) complex promotes stable microtubule-kinetochore attachments. Required for kinetochore oscillations and dynamics of microtubule plus-ends during live cell mitosis, possibly by forming a link between spindle microtubule plus-ends and mitotic chromosomes to achieve faithful cell division. This chain is Small kinetochore-associated protein (Knstrn), found in Mus musculus (Mouse).